A 302-amino-acid chain; its full sequence is Nudix hydrolase 22, chloroplastic (302 aa).

The N-terminal 25 residues, 1–25 (MKSGASAASPTAKSFNFGSSRLLAL), are a transit peptide targeting the chloroplast. The 157-residue stretch at 73–229 (PKKAAVLICL…DSDYVIWGLT (157 aa)) folds into the Nudix hydrolase domain. Residues 114-135 (KAEEHDKDDGITATREAEEEIG) carry the Nudix box motif. Mg(2+) is bound by residues Glu-129 and Glu-133.

The protein belongs to the Nudix hydrolase family. Mg(2+) is required as a cofactor. Mn(2+) serves as cofactor. Expressed in roots, leaves, stems and inflorescences.

It is found in the plastid. Its subcellular location is the chloroplast. Functionally, probably mediates the hydrolysis of some nucleoside diphosphate derivatives. The protein is Nudix hydrolase 22, chloroplastic (NUDT22) of Arabidopsis thaliana (Mouse-ear cress).